The chain runs to 398 residues: tRNA-specific 2-thiouridylase MnmA (398 aa).

Residues A18–S25 and L44 contribute to the ATP site. The active-site Nucleophile is the C112. C112 and C213 form a disulfide bridge. G136 contacts ATP. The segment at R163 to Q165 is interaction with tRNA. Catalysis depends on C213, which acts as the Cysteine persulfide intermediate.

Belongs to the MnmA/TRMU family.

It localises to the cytoplasm. The catalysed reaction is S-sulfanyl-L-cysteinyl-[protein] + uridine(34) in tRNA + AH2 + ATP = 2-thiouridine(34) in tRNA + L-cysteinyl-[protein] + A + AMP + diphosphate + H(+). In terms of biological role, catalyzes the 2-thiolation of uridine at the wobble position (U34) of tRNA, leading to the formation of s(2)U34. This is tRNA-specific 2-thiouridylase MnmA from Sinorhizobium fredii (strain NBRC 101917 / NGR234).